Consider the following 203-residue polypeptide: Twist-related protein 1 (203 aa).

Positions 1–18 are enriched in low complexity; it reads MMQDVSSSPVSPADDSLS. The interval 1–106 is disordered; the sequence is MMQDVSSSPV…GGGSPQSYEE (106 aa). The span at 34 to 43 shows a compositional bias: basic residues; that stretch reads RGGRKRRSSR. 2 stretches are compositionally biased toward gly residues: residues 46–65 and 80–100; these read AGGG…GGDE and GCGG…GGGS. Positions 109–160 constitute a bHLH domain; it reads TQRVMANVRERQRTQSLNEAFAALRKIIPTLPSDKLSKIQTLKLAARYIDFL. Residues 162-192 form a sufficient for transactivation activity region; it reads QVLQSDELDSKMASCSYVAHERLSYAFSVWR.

As to quaternary structure, efficient DNA binding requires dimerization with another bHLH protein. Homodimer or heterodimer with E proteins such as TCF3. ID1 binds preferentially to TCF3 but does not interact efficiently with TWIST1 so ID1 levels control the amount of TCF3 available to dimerize with TWIST and thus determine the type of dimer formed.

The protein resides in the nucleus. Acts as a transcriptional regulator. Inhibits myogenesis by sequestrating E proteins, inhibiting trans-activation by MEF2, and inhibiting DNA-binding by MYOD1 through physical interaction. This interaction probably involves the basic domains of both proteins. Also represses expression of pro-inflammatory cytokines such as TNFA and IL1B. Regulates cranial suture patterning and fusion. Activates transcription as a heterodimer with E proteins. Regulates gene expression differentially, depending on dimer composition. Homodimers induce expression of FGFR2 and POSTN while heterodimers repress FGFR2 and POSTN expression and induce THBS1 expression. Heterodimerization is also required for osteoblast differentiation. Represses the activity of the circadian transcriptional activator: NPAS2-BMAL1 heterodimer. The polypeptide is Twist-related protein 1 (TWIST1) (Saguinus oedipus (Cotton-top tamarin)).